Consider the following 1502-residue polypeptide: tRNA (32-2'-O)-methyltransferase regulator trm732 (1502 aa).

Belongs to the THADA family.

It is found in the cytoplasm. It localises to the nucleus. Together with methyltransferase trm7, methylates the 2'-O-ribose of nucleotides at position 32 of the anticodon loop of substrate tRNAs. This is tRNA (32-2'-O)-methyltransferase regulator trm732 from Schizosaccharomyces pombe (strain 972 / ATCC 24843) (Fission yeast).